Here is a 113-residue protein sequence, read N- to C-terminus: UPF0122 protein LAF_1235 (113 aa).

Belongs to the UPF0122 family.

Its function is as follows. Might take part in the signal recognition particle (SRP) pathway. This is inferred from the conservation of its genetic proximity to ftsY/ffh. May be a regulatory protein. This chain is UPF0122 protein LAF_1235, found in Limosilactobacillus fermentum (strain NBRC 3956 / LMG 18251) (Lactobacillus fermentum).